The primary structure comprises 144 residues: Phospholipase A2, membrane associated (144 aa).

The first 20 residues, 1–20, serve as a signal peptide directing secretion; it reads MKTLLLLAVIMAIGLLQVHG. Disulfide bonds link C46/C137, C48/C64, C63/C117, C69/C144, C70/C110, C79/C103, and C97/C108. Y47, G49, and S51 together coordinate Ca(2+). The active site involves H67. Ca(2+) is bound at residue D68. Residue D111 is part of the active site.

The protein belongs to the phospholipase A2 family. Ca(2+) serves as cofactor.

The protein resides in the secreted. It localises to the cell membrane. The protein localises to the mitochondrion outer membrane. The enzyme catalyses a 1,2-diacyl-sn-glycero-3-phosphoethanolamine + H2O = a 1-acyl-sn-glycero-3-phosphoethanolamine + a fatty acid + H(+). It carries out the reaction 1-hexadecanoyl-2-(9Z-octadecenoyl)-sn-glycero-3-phosphoethanolamine + H2O = 1-hexadecanoyl-sn-glycero-3-phosphoethanolamine + (9Z)-octadecenoate + H(+). The catalysed reaction is 1-hexadecanoyl-2-(9Z,12Z-octadecadienoyl)-sn-glycero-3-phosphoethanolamine + H2O = 1-hexadecanoyl-sn-glycero-3-phosphoethanolamine + (9Z,12Z)-octadecadienoate + H(+). It catalyses the reaction 1-hexadecanoyl-2-(5Z,8Z,11Z,14Z-eicosatetraenoyl)-sn-glycero-3-phosphoethanolamine + H2O = 1-hexadecanoyl-sn-glycero-3-phosphoethanolamine + (5Z,8Z,11Z,14Z)-eicosatetraenoate + H(+). The enzyme catalyses N-hexadecanoyl-1,2-di-(9Z-octadecenoyl)-sn-glycero-3-phosphoethanolamine + H2O = N-hexadecanoyl-1-(9Z-octadecenoyl)-sn-glycero-3-phosphoethanolamine + (9Z)-octadecenoate + H(+). It carries out the reaction 1,2-dihexadecanoyl-sn-glycero-3-phospho-(1'-sn-glycerol) + H2O = 1-hexadecanoyl-sn-glycero-3-phospho-(1'-sn-glycerol) + hexadecanoate + H(+). The catalysed reaction is 1-hexadecanoyl-2-(9Z-octadecenoyl)-sn-glycero-3-phosphoglycerol + H2O = 1-hexadecanoyl-sn-glycero-3-phosphoglycerol + (9Z)-octadecenoate + H(+). It catalyses the reaction 1-hexadecanoyl-2-(9Z-octadecenoyl)-sn-glycero-3-phospho-(1'-sn-glycerol) + H2O = 1-hexadecanoyl-sn-glycero-3-phospho-(1'-sn-glycerol) + (9Z)-octadecenoate + H(+). The enzyme catalyses a 1,2-diacyl-sn-glycero-3-phosphocholine + H2O = a 1-acyl-sn-glycero-3-phosphocholine + a fatty acid + H(+). It carries out the reaction 1,2-dihexadecanoyl-sn-glycero-3-phosphocholine + H2O = 1-hexadecanoyl-sn-glycero-3-phosphocholine + hexadecanoate + H(+). The catalysed reaction is 1-hexadecanoyl-2-(9Z-octadecenoyl)-sn-glycero-3-phosphocholine + H2O = 1-hexadecanoyl-sn-glycero-3-phosphocholine + (9Z)-octadecenoate + H(+). It catalyses the reaction 1-hexadecanoyl-2-(9Z,12Z-octadecadienoyl)-sn-glycero-3-phosphocholine + H2O = (9Z,12Z)-octadecadienoate + 1-hexadecanoyl-sn-glycero-3-phosphocholine + H(+). The enzyme catalyses 1-hexadecanoyl-2-(4Z,7Z,10Z,13Z,16Z,19Z-docosahexaenoyl)-sn-glycero-3-phosphocholine + H2O = (4Z,7Z,10Z,13Z,16Z,19Z)-docosahexaenoate + 1-hexadecanoyl-sn-glycero-3-phosphocholine + H(+). Functionally, secretory calcium-dependent phospholipase A2 that primarily targets extracellular phospholipids with implications in host antimicrobial defense, inflammatory response and tissue regeneration. Hydrolyzes the ester bond of the fatty acyl group attached at sn-2 position of phospholipids (phospholipase A2 activity) with preference for phosphatidylethanolamines and phosphatidylglycerols over phosphatidylcholines. Contributes to lipid remodeling of cellular membranes and generation of lipid mediators involved in pathogen clearance. Displays bactericidal activity against Gram-positive bacteria by directly hydrolyzing phospholipids of the bacterial membrane. Upon sterile inflammation, targets membrane phospholipids of extracellular mitochondria released from activated platelets, generating free unsaturated fatty acids such as arachidonate that is used by neighboring leukocytes to synthesize inflammatory eicosanoids such as leukotrienes. Simultaneously, by compromising mitochondrial membrane integrity, promotes the release in circulation of potent damage-associated molecular pattern molecules that activate the innate immune response. Plays a stem cell regulator role in the intestinal crypt. Within intracellular compartment mediates Paneth cell differentiation and its stem cell supporting functions by inhibiting Wnt signaling pathway in intestinal stem cell (ICS). Secreted in the intestinal lumen upon inflammation, acts in an autocrine way and promotes prostaglandin E2 synthesis that stimulates Wnt signaling pathway in ICS cells and tissue regeneration. May play a role in the biosynthesis of N-acyl ethanolamines that regulate energy metabolism and inflammation. Hydrolyzes N-acyl phosphatidylethanolamines to N-acyl lysophosphatidylethanolamines, which are further cleaved by a lysophospholipase D to release N-acyl ethanolamines. Independent of its catalytic activity, acts as a ligand for integrins. Binds to and activates integrins ITGAV:ITGB3, ITGA4:ITGB1 and ITGA5:ITGB1. Binds to a site (site 2) which is distinct from the classical ligand-binding site (site 1) and induces integrin conformational changes and enhanced ligand binding to site 1. Induces cell proliferation in an integrin-dependent manner. In Bos taurus (Bovine), this protein is Phospholipase A2, membrane associated (PLA2G2A).